We begin with the raw amino-acid sequence, 354 residues long: tRNA-specific 2-thiouridylase MnmA (354 aa).

Residues 6–13 (LLSGGVDS) and L33 contribute to the ATP site. C100 acts as the Nucleophile in catalysis. C100 and C195 are joined by a disulfide. G123 contacts ATP. An interaction with tRNA region spans residues 145 to 147 (KDQ). C195 (cysteine persulfide intermediate) is an active-site residue.

It belongs to the MnmA/TRMU family.

The protein localises to the cytoplasm. The enzyme catalyses S-sulfanyl-L-cysteinyl-[protein] + uridine(34) in tRNA + AH2 + ATP = 2-thiouridine(34) in tRNA + L-cysteinyl-[protein] + A + AMP + diphosphate + H(+). Its function is as follows. Catalyzes the 2-thiolation of uridine at the wobble position (U34) of tRNA, leading to the formation of s(2)U34. The protein is tRNA-specific 2-thiouridylase MnmA of Borrelia duttonii (strain Ly).